Reading from the N-terminus, the 184-residue chain is UPF0397 protein SAB2561c (184 aa).

5 helical membrane-spanning segments follow: residues 11–31 (VVAI…VVIP), 44–64 (AFLA…TGLV), 77–97 (AWWS…WIGL), 111–131 (MIYF…LIAP), and 148–168 (QGVI…TILL).

The protein belongs to the UPF0397 family.

It is found in the cell membrane. This chain is UPF0397 protein SAB2561c, found in Staphylococcus aureus (strain bovine RF122 / ET3-1).